A 354-amino-acid chain; its full sequence is UDP-N-acetylglucosamine--N-acetylmuramyl-(pentapeptide) pyrophosphoryl-undecaprenol N-acetylglucosamine transferase (354 aa).

UDP-N-acetyl-alpha-D-glucosamine is bound by residues 15–17 (TGG), Asn127, Arg163, Ser191, Ile242, 261–266 (ALTVSE), and Gln286.

This sequence belongs to the glycosyltransferase 28 family. MurG subfamily.

The protein localises to the cell inner membrane. The enzyme catalyses di-trans,octa-cis-undecaprenyl diphospho-N-acetyl-alpha-D-muramoyl-L-alanyl-D-glutamyl-meso-2,6-diaminopimeloyl-D-alanyl-D-alanine + UDP-N-acetyl-alpha-D-glucosamine = di-trans,octa-cis-undecaprenyl diphospho-[N-acetyl-alpha-D-glucosaminyl-(1-&gt;4)]-N-acetyl-alpha-D-muramoyl-L-alanyl-D-glutamyl-meso-2,6-diaminopimeloyl-D-alanyl-D-alanine + UDP + H(+). Its pathway is cell wall biogenesis; peptidoglycan biosynthesis. In terms of biological role, cell wall formation. Catalyzes the transfer of a GlcNAc subunit on undecaprenyl-pyrophosphoryl-MurNAc-pentapeptide (lipid intermediate I) to form undecaprenyl-pyrophosphoryl-MurNAc-(pentapeptide)GlcNAc (lipid intermediate II). In Pasteurella multocida (strain Pm70), this protein is UDP-N-acetylglucosamine--N-acetylmuramyl-(pentapeptide) pyrophosphoryl-undecaprenol N-acetylglucosamine transferase.